Consider the following 571-residue polypeptide: Protein dead ringer homolog (571 aa).

Disordered regions lie at residues 45–117 (QHQQ…EPDK) and 190–229 (KRMQQDHNIQQSTNHIPTPSSASSHTSSGSVTSQTNSCNG). Over residues 49–77 (RMMEQHKNDDVISNDVRCDDFSDGGERQR) the composition is skewed to basic and acidic residues. Over residues 195–206 (DHNIQQSTNHIP) the composition is skewed to polar residues. The span at 207–224 (TPSSASSHTSSGSVTSQT) shows a compositional bias: low complexity. The 93-residue stretch at 249-341 (DIKRKEFLDD…YLYPFECERE (93 aa)) folds into the ARID domain. Residues 459–471 (AAHHAAQQAAQHQ) are compositionally biased toward low complexity. The tract at residues 459–528 (AAHHAAQQAA…GDRGRHNEMS (70 aa)) is disordered. One can recognise an REKLES domain in the interval 473 to 558 (SLKKEIDSDY…GVLFAHSPNH (86 aa)). Composition is skewed to basic and acidic residues over residues 487 to 507 (PPEKKLSFDDSVRRLTPDNQR) and 518 to 527 (MGDRGRHNEM).

The protein localises to the nucleus. In terms of biological role, transcription factor. The protein is Protein dead ringer homolog (Ci-DRIL1/2) of Ciona intestinalis (Transparent sea squirt).